A 1925-amino-acid chain; its full sequence is Diacylglycerol kinase eta (1925 aa).

The region spanning 82 to 175 is the PH domain; that stretch reads AIIREGYLMK…WLGSLKTATA (94 aa). 2 consecutive Phorbol-ester/DAG-type zinc fingers follow at residues 195–245 and 268–319; these read HHHW…IANC and PHQW…PIVC. A DAGKc domain is found at 350-486; it reads GNFSPLLVFV…DRWSIMVFEK (137 aa). 8 disordered regions span residues 620–641, 783–805, 847–872, 1013–1065, 1113–1141, 1167–1234, 1256–1276, and 1385–1405; these read EKDNINSKERRNSRSLRSSEKE, ANIDDAGNRLSPSSEAGENTPTE, DKERTASGQVESEKEEADVNEKSEPQ, TTLC…NPQQ, DRNSGDNHNDNGKNEEADTPTNSAPTRTY, NTTT…SSAS, IRRHSSHAPSLAVRDYDKDKD, and FSAGDKDEKPGKDKERTPTEE. Residues 792–802 are compositionally biased toward polar residues; that stretch reads LSPSSEAGENT. The segment covering 863–872 has biased composition (basic and acidic residues); it reads ADVNEKSEPQ. Residues 1115–1128 are compositionally biased toward basic and acidic residues; the sequence is NSGDNHNDNGKNEE. A compositionally biased stretch (low complexity) spans 1167–1187; it reads NTTTSTSSSISTTTTTSTTST. Residues 1386–1405 show a composition bias toward basic and acidic residues; the sequence is SAGDKDEKPGKDKERTPTEE. The SAM domain occupies 1862–1925; sequence WSVNEVVTWL…LQAIKDLSEN (64 aa).

Belongs to the eukaryotic diacylglycerol kinase family.

The protein resides in the cytoplasm. The enzyme catalyses a 1,2-diacyl-sn-glycerol + ATP = a 1,2-diacyl-sn-glycero-3-phosphate + ADP + H(+). Its function is as follows. Phosphorylates diacylglycerol (DAG) to generate phosphatidic acid (PA). The chain is Diacylglycerol kinase eta from Drosophila mojavensis (Fruit fly).